We begin with the raw amino-acid sequence, 339 residues long: ATPase GET3 (339 aa).

ATP is bound at residue 34-41 (KGGVGKTT). Residue Asp-63 is part of the active site. Positions 244 and 271 each coordinate ATP. 2 residues coordinate Zn(2+): Cys-282 and Cys-285.

It belongs to the arsA ATPase family. Homodimer.

It localises to the cytoplasm. Its subcellular location is the endoplasmic reticulum. In terms of biological role, ATPase required for the post-translational delivery of tail-anchored (TA) proteins to the endoplasmic reticulum. Recognizes and selectively binds the transmembrane domain of TA proteins in the cytosol. This complex then targets to the endoplasmic reticulum by membrane-bound receptors, where the tail-anchored protein is released for insertion. This process is regulated by ATP binding and hydrolysis. ATP binding drives the homodimer towards the closed dimer state, facilitating recognition of newly synthesized TA membrane proteins. ATP hydrolysis is required for insertion. Subsequently, the homodimer reverts towards the open dimer state, lowering its affinity for the membrane-bound receptor, and returning it to the cytosol to initiate a new round of targeting. The chain is ATPase GET3 from Podospora anserina (strain S / ATCC MYA-4624 / DSM 980 / FGSC 10383) (Pleurage anserina).